The chain runs to 594 residues: DEAD-box ATP-dependent RNA helicase 25 (594 aa).

2 disordered regions span residues 56 to 80 (RSGG…EEGL) and 92 to 121 (GVRE…VDGS). A Q motif motif is present at residues 126 to 154 (TRFDQCTISPLSLKAVKDAGYERMTQVQE). The region spanning 157–340 (LPVILQGKDV…HIAMKKNYKF (184 aa)) is the Helicase ATP-binding domain. Position 170–177 (170–177 (AKTGTGKT)) interacts with ATP. Positions 288–291 (DEAD) match the DEAD box motif. The Helicase C-terminal domain occupies 370–520 (ILYDVLKKHV…SVDSSTQTIV (151 aa)).

The protein belongs to the DEAD box helicase family.

It catalyses the reaction ATP + H2O = ADP + phosphate + H(+). This chain is DEAD-box ATP-dependent RNA helicase 25, found in Oryza sativa subsp. japonica (Rice).